The chain runs to 65 residues: Large ribosomal subunit protein bL35 (65 aa).

The tract at residues 1 to 29 (MPKMKTHSGAKKRFKLTGSGKVKRQQANR) is disordered.

This sequence belongs to the bacterial ribosomal protein bL35 family.

The polypeptide is Large ribosomal subunit protein bL35 (Kocuria rhizophila (strain ATCC 9341 / DSM 348 / NBRC 103217 / DC2201)).